A 92-amino-acid polypeptide reads, in one-letter code: Small ribosomal subunit protein uS19c (92 aa).

Belongs to the universal ribosomal protein uS19 family.

The protein localises to the plastid. It localises to the chloroplast. Protein S19 forms a complex with S13 that binds strongly to the 16S ribosomal RNA. The chain is Small ribosomal subunit protein uS19c from Ceratophyllum demersum (Rigid hornwort).